Reading from the N-terminus, the 494-residue chain is NAD(P)H-quinone oxidoreductase subunit 2 B, chloroplastic (494 aa).

13 helical membrane-spanning segments follow: residues 6-26 (LLLF…GLIL), 39-59 (TPWF…VLLF), 81-101 (IFRF…VEYI), 106-126 (MAIT…MVLC), 131-151 (LVTI…LSGY), 166-186 (LLMG…LYGL), 211-231 (ILIA…LVPF), 277-297 (WHLL…LIAI), 305-325 (MLAY…IAGD), 336-356 (YMLF…LFGL), 377-397 (AFSL…AGFF), 413-433 (LLVS…LKII), and 468-488 (MIVC…IIAI).

Belongs to the complex I subunit 2 family. In terms of assembly, NDH is composed of at least 16 different subunits, 5 of which are encoded in the nucleus.

It localises to the plastid. The protein localises to the chloroplast thylakoid membrane. The enzyme catalyses a plastoquinone + NADH + (n+1) H(+)(in) = a plastoquinol + NAD(+) + n H(+)(out). The catalysed reaction is a plastoquinone + NADPH + (n+1) H(+)(in) = a plastoquinol + NADP(+) + n H(+)(out). NDH shuttles electrons from NAD(P)H:plastoquinone, via FMN and iron-sulfur (Fe-S) centers, to quinones in the photosynthetic chain and possibly in a chloroplast respiratory chain. The immediate electron acceptor for the enzyme in this species is believed to be plastoquinone. Couples the redox reaction to proton translocation, and thus conserves the redox energy in a proton gradient. This chain is NAD(P)H-quinone oxidoreductase subunit 2 B, chloroplastic, found in Cycas taitungensis (Prince sago).